A 201-amino-acid polypeptide reads, in one-letter code: Peptide deformylase (201 aa).

The tract at residues 1–24 is disordered; sequence MANHFSQLAKKSKTNGNSEKIAKE. Fe cation-binding residues include Cys-121 and His-163. The active site involves Glu-164. Position 167 (His-167) interacts with Fe cation.

The protein belongs to the polypeptide deformylase family. It depends on Fe(2+) as a cofactor.

The catalysed reaction is N-terminal N-formyl-L-methionyl-[peptide] + H2O = N-terminal L-methionyl-[peptide] + formate. Removes the formyl group from the N-terminal Met of newly synthesized proteins. Requires at least a dipeptide for an efficient rate of reaction. N-terminal L-methionine is a prerequisite for activity but the enzyme has broad specificity at other positions. The polypeptide is Peptide deformylase (Prochlorococcus marinus (strain MIT 9312)).